The chain runs to 326 residues: Meso-diaminopimelate D-dehydrogenase (326 aa).

NADP(+) is bound by residues Y11–L14, T35–R37, C69–S72, S92–D94, and V121–P125. Substrate is bound by residues D94, D124, W148, Q154–G155, T173, R199, H249, and N276.

The protein belongs to the diaminopimelate dehydrogenase family. In terms of assembly, homodimer.

The enzyme catalyses meso-2,6-diaminopimelate + NADP(+) + H2O = (S)-2-amino-6-oxoheptanedioate + NH4(+) + NADPH + H(+). The protein operates within amino-acid biosynthesis; L-lysine biosynthesis via DAP pathway; DL-2,6-diaminopimelate from (S)-tetrahydrodipicolinate: step 1/1. With respect to regulation, the enzyme is completely inhibited by p-chloromercuribenzoate and HgCl(2) in vitro. Thioglycollate, L-cysteine and Cu(2+) also strongly inhibit the enzyme. Its function is as follows. Catalyzes the reversible NADPH-dependent reductive amination of L-2-amino-6-oxopimelate, the acyclic form of L-tetrahydrodipicolinate, to generate the meso compound, D,L-2,6-diaminopimelate. Probably plays a role in lysine biosynthesis. Is highly specific for meso-2,6-diaminopimelate as the electron donor, since the following amino acids are inert for the oxidative deamination reaction: DL-2-aminopimelate, D-glutamate, L-glutamate, D-aspartate, L-aspartate, D-alanine, L-alanine, D-valine, L-valine, D-lysine, L-lysine, D-phenylalanine, L-phenylalanine, D-leucine, L-leucine, D-threonine, L-threonine, D-serine, L-serine, D-tryptophan, L-tryptophan, D-cysteine, L-cysteine, D-histidine, L-histidine, D-methionine, D-arginine, D-proline, D-asparagine, D-glutamine, D-isoleucine and D-ornithine. Moreover, exclusively uses NADP as the electron acceptor for the oxidative deamination of meso-DAP; NAD is inert. The chain is Meso-diaminopimelate D-dehydrogenase (ddh) from Ureibacillus thermosphaericus.